The sequence spans 98 residues: NADH-ubiquinone oxidoreductase chain 4L (98 aa).

Helical transmembrane passes span 2-22, 30-50, and 61-81; these read PFIY…LLLF, LLCL…TTLG, and IILM…LVTI.

The protein belongs to the complex I subunit 4L family. As to quaternary structure, core subunit of respiratory chain NADH dehydrogenase (Complex I) which is composed of 45 different subunits.

Its subcellular location is the mitochondrion inner membrane. It catalyses the reaction a ubiquinone + NADH + 5 H(+)(in) = a ubiquinol + NAD(+) + 4 H(+)(out). Functionally, core subunit of the mitochondrial membrane respiratory chain NADH dehydrogenase (Complex I) which catalyzes electron transfer from NADH through the respiratory chain, using ubiquinone as an electron acceptor. Part of the enzyme membrane arm which is embedded in the lipid bilayer and involved in proton translocation. The protein is NADH-ubiquinone oxidoreductase chain 4L (MT-ND4L) of Bradypus tridactylus (Pale-throated three-toed sloth).